The chain runs to 606 residues: Transmembrane 9 superfamily member 1 (606 aa).

The signal sequence occupies residues 1 to 27 (MTVLGHPRSWSCRWWPLLLLLLLTGRE). Asn178 carries N-linked (GlcNAc...) asparagine glycosylation. 4 helical membrane passes run 237–257 (LSII…AVIL), 310–330 (VLGV…MALL), 339–359 (GAIN…SGYV), and 373–393 (VWNI…TWSV). An N-linked (GlcNAc...) asparagine glycan is attached at Asn401. The next 4 membrane-spanning stretches (helical) occupy residues 412-432 (ILLL…IGGI), 469-489 (VGGF…FATV), 499-519 (GILF…SIAL), and 535-555 (SVLS…FYYA). N-linked (GlcNAc...) asparagine glycosylation is present at Asn559. The helical transmembrane segment at 570-590 (FGYSLLTGYVFFLMLGTISFF) threads the bilayer.

This sequence belongs to the nonaspanin (TM9SF) (TC 9.A.2) family.

It is found in the lysosome membrane. The protein localises to the cytoplasmic vesicle. The protein resides in the autophagosome membrane. Its function is as follows. Plays an essential role in autophagy. This chain is Transmembrane 9 superfamily member 1 (TM9SF1), found in Bos taurus (Bovine).